Reading from the N-terminus, the 420-residue chain is Dihydrolipoyllysine-residue succinyltransferase component of 2-oxoglutarate dehydrogenase complex (420 aa).

Residues M1–G76 form the Lipoyl-binding domain. Position 42 is an N6-lipoyllysine (K42). The tract at residues V75–K199 is disordered. Positions N81–S90 are enriched in polar residues. Positions S91–P102 are enriched in basic and acidic residues. Residues K103–P127 show a composition bias toward polar residues. The Peripheral subunit-binding (PSBD) domain occupies N124 to Q160. Basic and acidic residues predominate over residues D149 to N158. Over residues S159–Q174 the composition is skewed to low complexity. A compositionally biased stretch (polar residues) spans N175–S186. Residues H391 and D395 contribute to the active site.

Belongs to the 2-oxoacid dehydrogenase family. As to quaternary structure, forms a 24-polypeptide structural core with octahedral symmetry. Part of the 2-oxoglutarate dehydrogenase (OGDH) complex composed of E1 (2-oxoglutarate dehydrogenase), E2 (dihydrolipoamide succinyltransferase) and E3 (dihydrolipoamide dehydrogenase); the complex contains multiple copies of the three enzymatic components (E1, E2 and E3). (R)-lipoate serves as cofactor.

The catalysed reaction is N(6)-[(R)-dihydrolipoyl]-L-lysyl-[protein] + succinyl-CoA = N(6)-[(R)-S(8)-succinyldihydrolipoyl]-L-lysyl-[protein] + CoA. It functions in the pathway amino-acid degradation; L-lysine degradation via saccharopine pathway; glutaryl-CoA from L-lysine: step 6/6. Functionally, E2 component of the 2-oxoglutarate dehydrogenase (OGDH) complex which catalyzes the second step in the conversion of 2-oxoglutarate to succinyl-CoA and CO(2). This chain is Dihydrolipoyllysine-residue succinyltransferase component of 2-oxoglutarate dehydrogenase complex (odhB), found in Staphylococcus epidermidis (strain ATCC 35984 / DSM 28319 / BCRC 17069 / CCUG 31568 / BM 3577 / RP62A).